A 292-amino-acid polypeptide reads, in one-letter code: Aquaporin-3 (292 aa).

Residues 1–24 (MGRQKELMNRCGEMLHIRYRLLRQ) lie on the Cytoplasmic side of the membrane. A helical membrane pass occupies residues 25–42 (ALAECLGTLILVMFGCGS). The Extracellular segment spans residues 43-56 (VAQVVLSRGTHGGF). Residues 57–74 (LTINLAFGFAVTLGILVA) form a helical membrane-spanning segment. Residues 75-78 (GQVS) are Cytoplasmic-facing. An intramembrane region (discontinuously helical) is located at residues 79 to 92 (GAHLNPAVTFAMCF). Positions 83-85 (NPA) match the NPA 1 motif. The Cytoplasmic segment spans residues 93–100 (LAREPWIK). The chain crosses the membrane as a helical span at residues 101–121 (LPIYALAQTLGAFLGAGIVFG). Topologically, residues 122 to 159 (LYYDAIWAFANNELFVSGPNGTAGIFATYPSGHLDMVN) are extracellular. N141 carries N-linked (GlcNAc...) asparagine glycosylation. A helical transmembrane segment spans residues 160-177 (GFFDQFIGTAALIVCVLA). At 178-189 (IVDPYNNPVPRG) the chain is on the cytoplasmic side. Residues 190–206 (LEAFTVGLVVLVIGTSM) form a helical membrane-spanning segment. Over 207-210 (GFNS) the chain is Extracellular. The discontinuously helical intramembrane region spans 211 to 224 (GYAVNPARDFGPRL). The short motif at 215 to 217 (NPA) is the NPA 2 element. Residues 225-242 (FTALAGWGSEVFTTGRHW) are Extracellular-facing. A helical membrane pass occupies residues 243–264 (WWVPIVSPLLGSIAGVFVYQLM). Topologically, residues 265–292 (IGCHLEQPPPSTEEENVKLAHMKHKEQI) are cytoplasmic.

It belongs to the MIP/aquaporin (TC 1.A.8) family. As to quaternary structure, homotetramer; each monomer provides an independent glycerol/water pore. Could also exist in other oligomeric states. In terms of tissue distribution, detected in principal cells in collecting ducts in kidney medulla (at protein level). Renal medulla and colon. Predominantly in the inner medulla. Expressed in basal layer of epidermal keratinocytes.

Its subcellular location is the cell membrane. The protein resides in the basolateral cell membrane. The enzyme catalyses glycerol(in) = glycerol(out). The catalysed reaction is H2O(in) = H2O(out). It catalyses the reaction urea(in) = urea(out). It carries out the reaction H2O2(out) = H2O2(in). In terms of biological role, aquaglyceroporins form homotetrameric transmembrane channels, with each monomer independently mediating glycerol and water transport across the plasma membrane along their osmotic gradient. Could also be permeable to urea. Also participates in cell permeability to H2O2 and H2O2-mediated signaling. In skin, transports glycerol to the epidermis and stratum corneum, where it maintains hydration, elasticity, and supports lipid biosynthesis for barrier repair. In kidney, contributes to the reabsorption of water, helping the body maintain proper fluid balance. This is Aquaporin-3 from Mus musculus (Mouse).